Reading from the N-terminus, the 157-residue chain is Lipoprotein signal peptidase (157 aa).

4 consecutive transmembrane segments (helical) span residues 10–30, 36–56, 58–78, and 84–104; these read FIFIGVFLLIFGTDQAIKYAI, YESSIIDIVLVFNKGVAFSLL, FLEGSLKYLQILLILGLFIFL, and LFKAHTIEFGMVFGAGVSNIL. Catalysis depends on residues D114 and D131. Residues 123–143 traverse the membrane as a helical segment; the sequence is DFAIFNFADVMIDVGVGVLLI.

Belongs to the peptidase A8 family.

It localises to the cell inner membrane. The catalysed reaction is Release of signal peptides from bacterial membrane prolipoproteins. Hydrolyzes -Xaa-Yaa-Zaa-|-(S,diacylglyceryl)Cys-, in which Xaa is hydrophobic (preferably Leu), and Yaa (Ala or Ser) and Zaa (Gly or Ala) have small, neutral side chains.. The protein operates within protein modification; lipoprotein biosynthesis (signal peptide cleavage). This protein specifically catalyzes the removal of signal peptides from prolipoproteins. The chain is Lipoprotein signal peptidase from Helicobacter acinonychis (strain Sheeba).